The sequence spans 103 residues: UPF0298 protein LACR_0404 (103 aa).

This sequence belongs to the UPF0298 family.

The protein resides in the cytoplasm. In Lactococcus lactis subsp. cremoris (strain SK11), this protein is UPF0298 protein LACR_0404.